Here is a 289-residue protein sequence, read N- to C-terminus: Bifunctional protein FolD (289 aa).

Residues 166–168 and isoleucine 232 each bind NADP(+); that span reads GVS.

It belongs to the tetrahydrofolate dehydrogenase/cyclohydrolase family. As to quaternary structure, homodimer.

It catalyses the reaction (6R)-5,10-methylene-5,6,7,8-tetrahydrofolate + NADP(+) = (6R)-5,10-methenyltetrahydrofolate + NADPH. It carries out the reaction (6R)-5,10-methenyltetrahydrofolate + H2O = (6R)-10-formyltetrahydrofolate + H(+). Its pathway is one-carbon metabolism; tetrahydrofolate interconversion. Catalyzes the oxidation of 5,10-methylenetetrahydrofolate to 5,10-methenyltetrahydrofolate and then the hydrolysis of 5,10-methenyltetrahydrofolate to 10-formyltetrahydrofolate. The sequence is that of Bifunctional protein FolD from Methylobacillus flagellatus (strain ATCC 51484 / DSM 6875 / VKM B-1610 / KT).